Reading from the N-terminus, the 192-residue chain is Ion-translocating oxidoreductase complex subunit B (192 aa).

The hydrophobic stretch occupies residues 1–26 (MNAIWIAVAAVSLLGLAFGAILGYAS). Residues 32-91 (EDDPVVEKIDEILPQSQCGQCGYPGCRPYAEAISCNGEKINRCAPGGEAVMLKIAELLNV) form the 4Fe-4S domain. Residues cysteine 49, cysteine 52, cysteine 57, cysteine 74, cysteine 117, cysteine 120, cysteine 123, cysteine 127, cysteine 147, cysteine 150, cysteine 153, and cysteine 157 each coordinate [4Fe-4S] cluster. 4Fe-4S ferredoxin-type domains lie at 108–137 (MVAV…GATR) and 138–167 (VMHT…LQPV).

The protein belongs to the 4Fe4S bacterial-type ferredoxin family. RnfB subfamily. As to quaternary structure, the complex is composed of six subunits: RsxA, RsxB, RsxC, RsxD, RsxE and RsxG. [4Fe-4S] cluster serves as cofactor.

The protein resides in the cell inner membrane. Functionally, part of a membrane-bound complex that couples electron transfer with translocation of ions across the membrane. Required to maintain the reduced state of SoxR. In Shigella boydii serotype 4 (strain Sb227), this protein is Ion-translocating oxidoreductase complex subunit B.